Reading from the N-terminus, the 200-residue chain is Small ribosomal subunit protein uS4 (200 aa).

The region spanning 92–155 (SRLDAVVYQL…QKLNIIAESV (64 aa)) is the S4 RNA-binding domain.

This sequence belongs to the universal ribosomal protein uS4 family. In terms of assembly, part of the 30S ribosomal subunit. Contacts protein S5. The interaction surface between S4 and S5 is involved in control of translational fidelity.

Functionally, one of the primary rRNA binding proteins, it binds directly to 16S rRNA where it nucleates assembly of the body of the 30S subunit. In terms of biological role, with S5 and S12 plays an important role in translational accuracy. The protein is Small ribosomal subunit protein uS4 of Macrococcus caseolyticus (strain JCSC5402) (Macrococcoides caseolyticum).